The primary structure comprises 505 residues: Trans-cinnamate 4-monooxygenase (505 aa).

A helical transmembrane segment spans residues 3–23; that stretch reads LLLLEKTLLGLFAAIIVASIV. (E)-cinnamate contacts are provided by residues 213–218 and A306; that span reads RSRLAQ. C447 is a binding site for heme.

Belongs to the cytochrome P450 family. Heme is required as a cofactor.

It is found in the membrane. It catalyses the reaction (E)-cinnamate + reduced [NADPH--hemoprotein reductase] + O2 = (E)-4-coumarate + oxidized [NADPH--hemoprotein reductase] + H2O + H(+). It functions in the pathway phenylpropanoid metabolism; trans-4-coumarate biosynthesis; trans-4-coumarate from trans-cinnamate: step 1/1. In terms of biological role, catalyzes the first oxidative step of the phenylpropanoid pathway in higher plants by transforming trans-cinnamate into p-coumarate. The compounds formed by this pathway are essential components for lignification, pollination, and defense against ultraviolet light, predators and pathogens. The sequence is that of Trans-cinnamate 4-monooxygenase (CYP73A4) from Catharanthus roseus (Madagascar periwinkle).